Here is a 344-residue protein sequence, read N- to C-terminus: GTP 3',8-cyclase (344 aa).

One can recognise a Radical SAM core domain in the interval 19 to 244 (PFGRTISYLR…MDLAESTGGP (226 aa)). Arginine 28 lines the GTP pocket. 2 residues coordinate [4Fe-4S] cluster: cysteine 35 and cysteine 39. Tyrosine 41 provides a ligand contact to S-adenosyl-L-methionine. Cysteine 42 lines the [4Fe-4S] cluster pocket. GTP is bound at residue arginine 77. Glycine 81 serves as a coordination point for S-adenosyl-L-methionine. A GTP-binding site is contributed by threonine 111. Serine 135 lines the S-adenosyl-L-methionine pocket. Residue lysine 171 coordinates GTP. Residue methionine 205 participates in S-adenosyl-L-methionine binding. Residues cysteine 268 and cysteine 271 each contribute to the [4Fe-4S] cluster site. 273 to 275 (RVR) serves as a coordination point for GTP. Residue cysteine 285 coordinates [4Fe-4S] cluster.

The protein belongs to the radical SAM superfamily. MoaA family. In terms of assembly, monomer and homodimer. [4Fe-4S] cluster serves as cofactor.

The catalysed reaction is GTP + AH2 + S-adenosyl-L-methionine = (8S)-3',8-cyclo-7,8-dihydroguanosine 5'-triphosphate + 5'-deoxyadenosine + L-methionine + A + H(+). It participates in cofactor biosynthesis; molybdopterin biosynthesis. In terms of biological role, catalyzes the cyclization of GTP to (8S)-3',8-cyclo-7,8-dihydroguanosine 5'-triphosphate. The polypeptide is GTP 3',8-cyclase (Bradyrhizobium diazoefficiens (strain JCM 10833 / BCRC 13528 / IAM 13628 / NBRC 14792 / USDA 110)).